The following is a 948-amino-acid chain: MVSRCSCLGVQCLLLSLLLLAAWEVGSGQLHYSVYEEARHGTFVGRIAQDLGLELAELVPRLFRVASKRHGDLLEVNLQNGILFVNSRIDREELCGRSVECSIHLEVIVDRPLQVFHVDVEVKDINDNPPRFSVTEQKLSIPESRLLDSRFPLEGASDADVGENALLTYKLSPNEYFVLDIINKKDKDKFPVLVLRKLLDREENPQLKLLLTATDGGKPEFTGSVSLLILVLDANDNAPIFDRPVYEVKMYENQVNQTLVIRLNASDSDEGINKEMMYSFSSLVPPTIRRKFWINERTGEIKVNDAIDFEDSNTYQIHVDVTDKGNPPMVGHCTVLVELLDENDNSPEVIVTSLSLPVKEDAQVGTVIALISVSDHDSGANGQVTCSLTPHVPFKLVSTYKNYYSLVLDSALDRERVSAYELVVTARDGGSPPLWATASVSVEVADVNDNAPAFAQPEYTVFVKENNPPGYHIFTVSAWDADAQENALVSYSLVERRLGERSLSSYVSVHAQSGKVYALQPLDHEELELLQFQVSARDGGVPPLGSNLTLQVFVLDENDNAPALLASPAGSAGGAVSELVLRSVGAGHVVAKVRAVDADSGYNAWLSYELQSAAVGARIPFRVGLYTGEISTTRALDEADSPRQRLLVLVKDHGEPSLTATATVLVSLVEGSQAPKASSRASVGVAPEVALVDVNVYLIIAICAVSSLLVLTLLLYTALRCSAAPTEGACGPVKPTLVCSSTVGSWSYSQQRRQRVCSGEGLPKADLMAFSPSLPPCPMVDVDGEDQSIGGDHSRKPRQPNPDWRYSASLRAGMHSSVHLEEAGILRAGPGGPDQQWPTVSSATPEPEAGEVSPPVGAGVNSNSWTFKYGPGNPKQSGPGELPDKFIIPGSPAIISIRQEPANSQIDKSDFITFGKKEETKKKKKKKKGNKTQEKKEKGNSTTDNSDQ.

Positions 1–28 (MVSRCSCLGVQCLLLSLLLLAAWEVGSG) are cleaved as a signal peptide. Cadherin domains lie at 29-132 (QLHY…PPRF), 133-241 (SVTE…APIF), 242-349 (DRPV…SPEV), 350-454 (IVTS…APAF), 455-564 (AQPE…APAL), and 587-689 (GHVV…APEV). Residues 29–695 (QLHYSVYEEA…APEVALVDVN (667 aa)) lie on the Extracellular side of the membrane. Asn256 and Asn264 each carry an N-linked (GlcNAc...) asparagine glycan. Asn547 is a glycosylation site (N-linked (GlcNAc...) asparagine). A helical transmembrane segment spans residues 696–716 (VYLIIAICAVSSLLVLTLLLY). At 717–948 (TALRCSAAPT…GNSTTDNSDQ (232 aa)) the chain is on the cytoplasmic side. 6 PXXP repeats span residues 732-735 (PVKP), 772-775 (PSLP), 797-800 (PRQP), 830-833 (PGGP), 871-874 (PGNP), and 889-892 (PGSP). The interval 732 to 892 (PVKPTLVCSS…PDKFIIPGSP (161 aa)) is 6 X 4 AA repeats of P-X-X-P. Disordered stretches follow at residues 783–804 (DGED…NPDW) and 827–948 (RAGP…NSDQ). Basic and acidic residues predominate over residues 907–921 (DKSDFITFGKKEETK).

The protein localises to the cell membrane. In terms of biological role, potential calcium-dependent cell-adhesion protein. May be involved in the establishment and maintenance of specific neuronal connections in the brain. The sequence is that of Protocadherin alpha-10 (PCDHA10) from Pan troglodytes (Chimpanzee).